Reading from the N-terminus, the 296-residue chain is Ribosomal RNA small subunit methyltransferase H (296 aa).

S-adenosyl-L-methionine-binding positions include glycine 38 to histidine 40, glutamate 57, phenylalanine 80, aspartate 103, and histidine 110.

This sequence belongs to the methyltransferase superfamily. RsmH family.

The protein localises to the cytoplasm. The catalysed reaction is cytidine(1402) in 16S rRNA + S-adenosyl-L-methionine = N(4)-methylcytidine(1402) in 16S rRNA + S-adenosyl-L-homocysteine + H(+). In terms of biological role, specifically methylates the N4 position of cytidine in position 1402 (C1402) of 16S rRNA. This is Ribosomal RNA small subunit methyltransferase H from Borreliella burgdorferi (strain ATCC 35210 / DSM 4680 / CIP 102532 / B31) (Borrelia burgdorferi).